The primary structure comprises 452 residues: tRNA modification GTPase MnmE (452 aa).

Residues Arg-21, Glu-78, and Lys-118 each contribute to the (6S)-5-formyl-5,6,7,8-tetrahydrofolate site. The region spanning 214–375 (GMKVVIAGRP…LREHLKQSMG (162 aa)) is the TrmE-type G domain. Asn-224 serves as a coordination point for K(+). Residues 224-229 (NAGKSS), 243-249 (TDIAGTT), and 268-271 (DTAG) each bind GTP. Ser-228 is a binding site for Mg(2+). Positions 243, 245, and 248 each coordinate K(+). Thr-249 provides a ligand contact to Mg(2+). (6S)-5-formyl-5,6,7,8-tetrahydrofolate is bound at residue Lys-452.

This sequence belongs to the TRAFAC class TrmE-Era-EngA-EngB-Septin-like GTPase superfamily. TrmE GTPase family. In terms of assembly, homodimer. Heterotetramer of two MnmE and two MnmG subunits. Requires K(+) as cofactor.

It localises to the cytoplasm. Functionally, exhibits a very high intrinsic GTPase hydrolysis rate. Involved in the addition of a carboxymethylaminomethyl (cmnm) group at the wobble position (U34) of certain tRNAs, forming tRNA-cmnm(5)s(2)U34. The chain is tRNA modification GTPase MnmE from Actinobacillus succinogenes (strain ATCC 55618 / DSM 22257 / CCUG 43843 / 130Z).